The following is a 197-amino-acid chain: Protein shisa-4 (197 aa).

The signal sequence occupies residues M1 to A27. Topologically, residues S28–A87 are extracellular. A helical transmembrane segment spans residues G88–L108. Topologically, residues C109–A197 are cytoplasmic.

It belongs to the shisa family.

Its subcellular location is the membrane. This is Protein shisa-4 (Shisa4) from Mus musculus (Mouse).